Consider the following 63-residue polypeptide: Large ribosomal subunit protein eL37 (63 aa).

Positions 20, 23, 35, and 38 each coordinate Zn(2+). The segment at 20–38 (CRRCGHHSFNVRKGYCAHC) adopts a C4-type zinc-finger fold.

Belongs to the eukaryotic ribosomal protein eL37 family. Requires Zn(2+) as cofactor.

Functionally, binds to the 23S rRNA. In Thermofilum pendens (strain DSM 2475 / Hrk 5), this protein is Large ribosomal subunit protein eL37.